The primary structure comprises 358 residues: Protein-glutamate methylesterase/protein-glutamine glutaminase 1 (358 aa).

The Response regulatory domain maps to 7 to 124 (SVLLVDDSAV…KNFLIDSAAE (118 aa)). Aspartate 58 carries the post-translational modification 4-aspartylphosphate. The CheB-type methylesterase domain occupies 170-358 (AQTTERIVAI…QEIHQAILHR (189 aa)). Active-site residues include serine 182, histidine 208, and aspartate 304.

The protein belongs to the CheB family. Phosphorylated by CheA. Phosphorylation of the N-terminal regulatory domain activates the methylesterase activity.

It localises to the cytoplasm. It catalyses the reaction [protein]-L-glutamate 5-O-methyl ester + H2O = L-glutamyl-[protein] + methanol + H(+). The catalysed reaction is L-glutaminyl-[protein] + H2O = L-glutamyl-[protein] + NH4(+). Involved in chemotaxis. Part of a chemotaxis signal transduction system that modulates chemotaxis in response to various stimuli. Catalyzes the demethylation of specific methylglutamate residues introduced into the chemoreceptors (methyl-accepting chemotaxis proteins or MCP) by CheR. Also mediates the irreversible deamidation of specific glutamine residues to glutamic acid. The sequence is that of Protein-glutamate methylesterase/protein-glutamine glutaminase 1 from Pseudomonas savastanoi pv. phaseolicola (strain 1448A / Race 6) (Pseudomonas syringae pv. phaseolicola (strain 1448A / Race 6)).